Here is a 756-residue protein sequence, read N- to C-terminus: Hyperosmolality-gated Ca2+ permeable channel 1.5 (756 aa).

Helical transmembrane passes span isoleucine 7 to isoleucine 27, isoleucine 101 to valine 121, serine 154 to leucine 174, leucine 373 to valine 393, phenylalanine 425 to methionine 445, tyrosine 465 to glutamine 485, alanine 510 to leucine 530, phenylalanine 574 to phenylalanine 594, valine 628 to alanine 648, and serine 651 to glycine 671. The segment at proline 731–threonine 756 is disordered. A compositionally biased stretch (polar residues) spans arginine 746 to threonine 756.

It belongs to the CSC1 (TC 1.A.17) family.

The protein localises to the membrane. Functionally, acts as an osmosensitive calcium-permeable cation channel. The polypeptide is Hyperosmolality-gated Ca2+ permeable channel 1.5 (Arabidopsis thaliana (Mouse-ear cress)).